A 558-amino-acid chain; its full sequence is Factor VII-activating protease (558 aa).

Residues 1-23 (MFVRMLVFRVLLLIALVGKSVIG) form the signal peptide. EGF-like domains follow at residues 71 to 107 (DDDPCQSNPCEHGGDCIIRGDTFSCSCPAPFSGSRCQ), 109 to 146 (AQNKCKDNPCVHGDCLITQKHPYYRCACKYPYTGPDCS), and 148 to 186 (VLPACRPNPCQNGGVCSRHRRRSRFTCACPDQYKGKFCE). 18 cysteine pairs are disulfide-bonded: C75–C86, C80–C95, C97–C106, C113–C123, C118–C134, C136–C145, C152–C163, C157–C174, C176–C185, C192–C274, C213–C255, C244–C269, C299–C433, C345–C361, C353–C422, C445–C513, C475–C491, and C503–C531. Residues 191-274 (DCYVGDGYSY…KWEYCDVTVC (84 aa)) form the Kringle domain. In terms of domain architecture, Peptidase S1 spans 312 to 553 (IYGGFKSTAG…FLNWIKTTMH (242 aa)). Active-site charge relay system residues include H360 and D409. The Charge relay system role is filled by S507.

This sequence belongs to the peptidase S1 family. As to quaternary structure, heterodimer; disulfide-linked. Heterodimer of a 50 kDa heavy and a 27 kDa light chain linked by a disulfide bond. Proteolytic cleavage at Gly-23 or Met-27 can give rise to the 50 kDa heavy chain (HC) and cleavage at Arg-311 or Lys-317 can give rise to the 27 kDa light chain (LC). The HC can undergo further proteolytic cleavage giving rise to a 26 kDa fragment. The LC can undergo further proteolytic cleavage at Arg-311 leading to a 17-kDa fragment and at Arg-478 leading to a 8-kDa fragment. Liver and kidney.

Its subcellular location is the secreted. Its function is as follows. Cleaves the alpha-chain at multiple sites and the beta-chain between 'Lys-53' and 'Lys-54' but not the gamma-chain of fibrinogen and therefore does not initiate the formation of the fibrin clot and does not cause the fibrinolysis directly. It does not cleave (activate) prothrombin and plasminogen but converts the inactive single chain urinary plasminogen activator (pro-urokinase) to the active two chain form. Activates coagulation factor VII. May function as a tumor suppressor negatively regulating cell proliferation and cell migration. The protein is Factor VII-activating protease of Mus musculus (Mouse).